We begin with the raw amino-acid sequence, 322 residues long: ATP-dependent 6-phosphofructokinase (322 aa).

Gly12 contributes to the ATP binding site. Residue 22 to 26 (RATAK) participates in ADP binding. ATP contacts are provided by residues 73 to 74 (RS) and 103 to 106 (GDGS). Residue Asp104 coordinates Mg(2+). 127 to 129 (TID) lines the substrate pocket. Asp129 acts as the Proton acceptor in catalysis. Arg156 serves as a coordination point for ADP. Substrate-binding positions include Arg164 and 171–173 (MGR). ADP-binding positions include 187–189 (GGD) and 215–217 (KLH). Substrate-binding positions include Glu224, Arg245, and 251-254 (HIQR).

The protein belongs to the phosphofructokinase type A (PFKA) family. ATP-dependent PFK group I subfamily. Prokaryotic clade 'B1' sub-subfamily. In terms of assembly, homotetramer. The cofactor is Mg(2+).

It is found in the cytoplasm. The catalysed reaction is beta-D-fructose 6-phosphate + ATP = beta-D-fructose 1,6-bisphosphate + ADP + H(+). The protein operates within carbohydrate degradation; glycolysis; D-glyceraldehyde 3-phosphate and glycerone phosphate from D-glucose: step 3/4. Its activity is regulated as follows. Allosterically activated by ADP and other diphosphonucleosides, and allosterically inhibited by phosphoenolpyruvate. In terms of biological role, catalyzes the phosphorylation of D-fructose 6-phosphate to fructose 1,6-bisphosphate by ATP, the first committing step of glycolysis. This Fusobacterium nucleatum subsp. nucleatum (strain ATCC 25586 / DSM 15643 / BCRC 10681 / CIP 101130 / JCM 8532 / KCTC 2640 / LMG 13131 / VPI 4355) protein is ATP-dependent 6-phosphofructokinase.